Here is a 123-residue protein sequence, read N- to C-terminus: Large ribosomal subunit protein uL18 (123 aa).

This sequence belongs to the universal ribosomal protein uL18 family. Part of the 50S ribosomal subunit; part of the 5S rRNA/L5/L18/L25 subcomplex. Contacts the 5S and 23S rRNAs.

This is one of the proteins that bind and probably mediate the attachment of the 5S RNA into the large ribosomal subunit, where it forms part of the central protuberance. This chain is Large ribosomal subunit protein uL18, found in Chlamydia muridarum (strain MoPn / Nigg).